The sequence spans 178 residues: ATP synthase subunit delta (178 aa).

It belongs to the ATPase delta chain family. In terms of assembly, F-type ATPases have 2 components, F(1) - the catalytic core - and F(0) - the membrane proton channel. F(1) has five subunits: alpha(3), beta(3), gamma(1), delta(1), epsilon(1). F(0) has three main subunits: a(1), b(2) and c(10-14). The alpha and beta chains form an alternating ring which encloses part of the gamma chain. F(1) is attached to F(0) by a central stalk formed by the gamma and epsilon chains, while a peripheral stalk is formed by the delta and b chains.

Its subcellular location is the cell inner membrane. F(1)F(0) ATP synthase produces ATP from ADP in the presence of a proton or sodium gradient. F-type ATPases consist of two structural domains, F(1) containing the extramembraneous catalytic core and F(0) containing the membrane proton channel, linked together by a central stalk and a peripheral stalk. During catalysis, ATP synthesis in the catalytic domain of F(1) is coupled via a rotary mechanism of the central stalk subunits to proton translocation. In terms of biological role, this protein is part of the stalk that links CF(0) to CF(1). It either transmits conformational changes from CF(0) to CF(1) or is implicated in proton conduction. The chain is ATP synthase subunit delta from Stutzerimonas stutzeri (strain A1501) (Pseudomonas stutzeri).